We begin with the raw amino-acid sequence, 201 residues long: ATP-dependent Clp protease proteolytic subunit (201 aa).

Ser101 serves as the catalytic Nucleophile. The active site involves His126.

It belongs to the peptidase S14 family. As to quaternary structure, fourteen ClpP subunits assemble into 2 heptameric rings which stack back to back to give a disk-like structure with a central cavity, resembling the structure of eukaryotic proteasomes.

It localises to the cytoplasm. The catalysed reaction is Hydrolysis of proteins to small peptides in the presence of ATP and magnesium. alpha-casein is the usual test substrate. In the absence of ATP, only oligopeptides shorter than five residues are hydrolyzed (such as succinyl-Leu-Tyr-|-NHMec, and Leu-Tyr-Leu-|-Tyr-Trp, in which cleavage of the -Tyr-|-Leu- and -Tyr-|-Trp bonds also occurs).. Functionally, cleaves peptides in various proteins in a process that requires ATP hydrolysis. Has a chymotrypsin-like activity. Plays a major role in the degradation of misfolded proteins. The sequence is that of ATP-dependent Clp protease proteolytic subunit from Francisella tularensis subsp. tularensis (strain FSC 198).